A 125-amino-acid polypeptide reads, in one-letter code: Large ribosomal subunit protein bL12 (125 aa).

Belongs to the bacterial ribosomal protein bL12 family. In terms of assembly, homodimer. Part of the ribosomal stalk of the 50S ribosomal subunit. Forms a multimeric L10(L12)X complex, where L10 forms an elongated spine to which 2 to 4 L12 dimers bind in a sequential fashion. Binds GTP-bound translation factors.

Its function is as follows. Forms part of the ribosomal stalk which helps the ribosome interact with GTP-bound translation factors. Is thus essential for accurate translation. The chain is Large ribosomal subunit protein bL12 from Polaromonas naphthalenivorans (strain CJ2).